Here is a 63-residue protein sequence, read N- to C-terminus: MKASELREKTAEQLNEQLLGLLRDQFNLRMQKATGQLGQTHLLSQVKRDIARVKTVLNQQAGK.

Belongs to the universal ribosomal protein uL29 family.

This Azotobacter vinelandii (strain DJ / ATCC BAA-1303) protein is Large ribosomal subunit protein uL29.